The chain runs to 567 residues: Arginine--tRNA ligase (567 aa).

The short motif at 121-131 is the 'HIGH' region element; it reads ANPNGPLHVGH.

This sequence belongs to the class-I aminoacyl-tRNA synthetase family.

The protein localises to the cytoplasm. The catalysed reaction is tRNA(Arg) + L-arginine + ATP = L-arginyl-tRNA(Arg) + AMP + diphosphate. The protein is Arginine--tRNA ligase of Methanosarcina acetivorans (strain ATCC 35395 / DSM 2834 / JCM 12185 / C2A).